A 197-amino-acid chain; its full sequence is Holliday junction branch migration complex subunit RuvA (197 aa).

Residues Met1–Leu63 form a domain I region. Positions Asn64–Ser139 are domain II. Ser139 is a region of interest (flexible linker). The interval Thr140–Asn197 is domain III.

Belongs to the RuvA family. In terms of assembly, homotetramer. Forms an RuvA(8)-RuvB(12)-Holliday junction (HJ) complex. HJ DNA is sandwiched between 2 RuvA tetramers; dsDNA enters through RuvA and exits via RuvB. An RuvB hexamer assembles on each DNA strand where it exits the tetramer. Each RuvB hexamer is contacted by two RuvA subunits (via domain III) on 2 adjacent RuvB subunits; this complex drives branch migration. In the full resolvosome a probable DNA-RuvA(4)-RuvB(12)-RuvC(2) complex forms which resolves the HJ.

The protein resides in the cytoplasm. The RuvA-RuvB-RuvC complex processes Holliday junction (HJ) DNA during genetic recombination and DNA repair, while the RuvA-RuvB complex plays an important role in the rescue of blocked DNA replication forks via replication fork reversal (RFR). RuvA specifically binds to HJ cruciform DNA, conferring on it an open structure. The RuvB hexamer acts as an ATP-dependent pump, pulling dsDNA into and through the RuvAB complex. HJ branch migration allows RuvC to scan DNA until it finds its consensus sequence, where it cleaves and resolves the cruciform DNA. This is Holliday junction branch migration complex subunit RuvA from Borreliella burgdorferi (strain ATCC 35210 / DSM 4680 / CIP 102532 / B31) (Borrelia burgdorferi).